Consider the following 526-residue polypeptide: Probable feruloyl esterase B-2 (526 aa).

The signal sequence occupies residues 1 to 18; it reads MTKLSLLPLLTLASAVLA. Intrachain disulfides connect Cys-27–Cys-74 and Cys-62–Cys-113. A glycan (N-linked (GlcNAc...) asparagine) is linked at Asn-52. The N-linked (GlcNAc...) asparagine glycan is linked to Asn-137. Intrachain disulfides connect Cys-186–Cys-441, Cys-255–Cys-272, Cys-281–Cys-291, and Cys-503–Cys-525. Ser-187 acts as the Acyl-ester intermediate in catalysis. Asn-233 is a glycosylation site (N-linked (GlcNAc...) asparagine). Ca(2+) is bound by residues Asp-256, Asp-259, Ala-261, Asp-263, and Ile-265. Catalysis depends on charge relay system residues Asp-400 and His-440. A glycan (N-linked (GlcNAc...) asparagine) is linked at Asn-516.

It belongs to the tannase family.

The protein localises to the secreted. It carries out the reaction feruloyl-polysaccharide + H2O = ferulate + polysaccharide.. In terms of biological role, involved in degradation of plant cell walls. Hydrolyzes the feruloyl-arabinose ester bond in arabinoxylans as well as the feruloyl-galactose and feruloyl-arabinose ester bonds in pectin. This Aspergillus fumigatus (strain ATCC MYA-4609 / CBS 101355 / FGSC A1100 / Af293) (Neosartorya fumigata) protein is Probable feruloyl esterase B-2 (faeB-2).